The primary structure comprises 252 residues: tRNA pseudouridine synthase A (252 aa).

Residue D51 is the Nucleophile of the active site. A substrate-binding site is contributed by Y105.

Belongs to the tRNA pseudouridine synthase TruA family.

The catalysed reaction is uridine(38/39/40) in tRNA = pseudouridine(38/39/40) in tRNA. Its function is as follows. Formation of pseudouridine at positions 38, 39 and 40 in the anticodon stem and loop of transfer RNAs. This is tRNA pseudouridine synthase A from Thermoplasma acidophilum (strain ATCC 25905 / DSM 1728 / JCM 9062 / NBRC 15155 / AMRC-C165).